The chain runs to 70 residues: Kappa-scoloptoxin(07)-Ssm2b (70 aa).

The first 19 residues, 1–19 (MLVFYALLFVSVFSSTVMG), serve as a signal peptide directing secretion. The propeptide occupies 20–39 (ATIDKPILREAIEEIDVNKR).

Belongs to the scoloptoxin-07 family. Post-translationally, contains 3 disulfide bonds. Expressed by the venom gland.

It localises to the secreted. Inhibits voltage-gated potassium channels. The chain is Kappa-scoloptoxin(07)-Ssm2b from Scolopendra mutilans (Chinese red-headed centipede).